A 115-amino-acid chain; its full sequence is Dolichyl-diphosphooligosaccharide--protein glycosyltransferase subunit DAD2 (115 aa).

Residues 1-31 (MVKSTSKDAQDLFHSLHSAYTATPTNLKIID) lie on the Cytoplasmic side of the membrane. The chain crosses the membrane as a helical span at residues 32-52 (LYVCFAVFTALIQVAYMALVG). Topologically, residues 53–55 (SFP) are lumenal. A helical membrane pass occupies residues 56–76 (FNSFLSGVLSCIGTAVLAVCL). The Cytoplasmic portion of the chain corresponds to 77-94 (RIQVNKENKEFKDLAPER). The chain crosses the membrane as a helical span at residues 95 to 115 (AFADFVLCNLVLHLVIINFLG).

Belongs to the DAD/OST2 family. In terms of assembly, component of the oligosaccharyltransferase (OST) complex.

It localises to the endoplasmic reticulum membrane. The protein operates within protein modification; protein glycosylation. Functionally, subunit of the oligosaccharyl transferase (OST) complex that catalyzes the initial transfer of a defined glycan (Glc(3)Man(9)GlcNAc(2) in eukaryotes) from the lipid carrier dolichol-pyrophosphate to an asparagine residue within an Asn-X-Ser/Thr consensus motif in nascent polypeptide chains, the first step in protein N-glycosylation. N-glycosylation occurs cotranslationally and the complex associates with the Sec61 complex at the channel-forming translocon complex that mediates protein translocation across the endoplasmic reticulum (ER). All subunits are required for a maximal enzyme activity. The chain is Dolichyl-diphosphooligosaccharide--protein glycosyltransferase subunit DAD2 (DAD2) from Arabidopsis thaliana (Mouse-ear cress).